We begin with the raw amino-acid sequence, 83 residues long: Small ribosomal subunit protein bS16 (83 aa).

This sequence belongs to the bacterial ribosomal protein bS16 family.

This Borrelia duttonii (strain Ly) protein is Small ribosomal subunit protein bS16.